Reading from the N-terminus, the 978-residue chain is NACHT, LRR and PYD domains-containing protein 4E (978 aa).

The 93-residue stretch at 1–93 (MASFFSDFGL…MERAGREIAG (93 aa)) folds into the Pyrin domain. Residues 148-471 (HMVFLQGVAG…FHLLKSHVDH (324 aa)) form the NACHT domain. 154 to 161 (GVAGIGKS) is an ATP binding site. LRR repeat units follow at residues 594-617 (CSTL…HSYT), 694-717 (LLNL…LNQA), 746-773 (SKML…LCHP), 802-825 (NKTL…VLCG), 859-882 (NQNL…LLCD), and 916-940 (CKTL…LFEA).

It belongs to the NLRP family.

In terms of biological role, may be involved in inflammation and recognition of cytosolic pathogen-associated molecular patterns (PAMPs) not intercepted by membrane-bound receptors. This is NACHT, LRR and PYD domains-containing protein 4E (Nlrp4e) from Mus musculus (Mouse).